The chain runs to 800 residues: Serine/threonine-protein kinase KIN4 (800 aa).

Residues 46 to 313 (YIIGSTLGEG…LQTIKRHVWL (268 aa)) form the Protein kinase domain. ATP is bound by residues 52–60 (LGEGEFGKV) and Lys80. Asp175 (proton acceptor) is an active-site residue. 2 disordered regions span residues 331-397 (LQKE…GSKV) and 438-487 (SARH…TSFT). Residues 348–358 (STYSSSASSYS) are compositionally biased toward low complexity. A phosphoserine mark is found at Ser365 and Ser388. Composition is skewed to polar residues over residues 380 to 395 (QLATSRPASPTFSTGS) and 459 to 473 (GSPTTARTRNAPSSK). Phosphoserine is present on Ser521. Disordered regions lie at residues 629-661 (EPTNSTDEDHVESQLENVGHSSNKSDASSDKDS) and 678-754 (SLNG…PGRS). Residues 678 to 721 (SLNGSRSTVESRTSKGNAPPVSSRNPSGQSNRSNIKITQQQPRN) are compositionally biased toward polar residues. The span at 727-740 (PNPDKKINDNRIRD) shows a compositional bias: basic and acidic residues. Ser748 is modified (phosphoserine).

The protein belongs to the protein kinase superfamily. Ser/Thr protein kinase family.

The enzyme catalyses L-seryl-[protein] + ATP = O-phospho-L-seryl-[protein] + ADP + H(+). It catalyses the reaction L-threonyl-[protein] + ATP = O-phospho-L-threonyl-[protein] + ADP + H(+). Its function is as follows. This protein is probably a serine/threonine protein kinase. The sequence is that of Serine/threonine-protein kinase KIN4 (KIN4) from Saccharomyces cerevisiae (strain ATCC 204508 / S288c) (Baker's yeast).